Reading from the N-terminus, the 394-residue chain is Glutamyl-tRNA reductase (394 aa).

Substrate-binding positions include 45–48 (TCNR), S99, 104–106 (EEQ), and Q110. Catalysis depends on C46, which acts as the Nucleophile. Position 175 to 180 (175 to 180 (GLGNIG)) interacts with NADP(+).

It belongs to the glutamyl-tRNA reductase family. In terms of assembly, homodimer.

The catalysed reaction is (S)-4-amino-5-oxopentanoate + tRNA(Glu) + NADP(+) = L-glutamyl-tRNA(Glu) + NADPH + H(+). The protein operates within porphyrin-containing compound metabolism; protoporphyrin-IX biosynthesis; 5-aminolevulinate from L-glutamyl-tRNA(Glu): step 1/2. Functionally, catalyzes the NADPH-dependent reduction of glutamyl-tRNA(Glu) to glutamate 1-semialdehyde (GSA). The protein is Glutamyl-tRNA reductase of Caldicellulosiruptor saccharolyticus (strain ATCC 43494 / DSM 8903 / Tp8T 6331).